The chain runs to 119 residues: MFGVGIDIIEIDRIRKSYQTYGDRFLKKIFTEGERVYCFSKSNPYASLAARFAAKEAVAKALGTGIGKLLKWKEIEMRRDSRQPQVVVPEALLCSLGVKRVLLSVSHSREYATAVAIAE.

Mg(2+)-binding residues include Asp7 and Glu56.

This sequence belongs to the P-Pant transferase superfamily. AcpS family. Requires Mg(2+) as cofactor.

The protein resides in the cytoplasm. It catalyses the reaction apo-[ACP] + CoA = holo-[ACP] + adenosine 3',5'-bisphosphate + H(+). Functionally, transfers the 4'-phosphopantetheine moiety from coenzyme A to a Ser of acyl-carrier-protein. The sequence is that of Holo-[acyl-carrier-protein] synthase from Chlamydia trachomatis serovar L2 (strain ATCC VR-902B / DSM 19102 / 434/Bu).